The primary structure comprises 160 residues: Oligoribonuclease (160 aa).

The region spanning 8-158 (LIWIDLEMTG…YNKLKKKTLI (151 aa)) is the Exonuclease domain. The active site involves Tyr129.

The protein belongs to the oligoribonuclease family.

It localises to the cytoplasm. Its function is as follows. 3'-to-5' exoribonuclease specific for small oligoribonucleotides. The polypeptide is Oligoribonuclease (orn) (Buchnera aphidicola subsp. Baizongia pistaciae (strain Bp)).